The primary structure comprises 485 residues: Pre-glycoprotein polyprotein GP complex (485 aa).

Gly2 carries N-myristoyl glycine; by host lipidation. Residues 2–17 (GQLISFFGEIPTILQE) lie on the Extracellular side of the membrane. Residues 18–33 (ALNIALIAVSIIATIK) form a helical membrane-spanning segment. At 34 to 58 (GVVNVWKSGLIQLLMFVMLAGRSCS) the chain is on the cytoplasmic side. A Zn(2+)-binding site is contributed by Cys57. Over 59-424 (VQIGHHLELE…QGRTPLSLVD (366 aa)) the chain is Extracellular. 4 disulfide bridges follow: Cys85/Cys225, Cys271/Cys284, Cys293/Cys302, and Cys356/Cys377. Residues Asn88, Asn128, Asn179, and Asn218 are each glycosylated (N-linked (GlcNAc...) asparagine; by host). Asn357, Asn365, Asn382, and Asn387 each carry an N-linked (GlcNAc...) asparagine; by host glycan. The chain crosses the membrane as a helical span at residues 425 to 445 (VCFWSTLFYTASIFLHLIRIP). The Cytoplasmic portion of the chain corresponds to 446 to 485 (THRHIVGEGCPKPHRLRADSTCACGLYKQKRRPLKWVRSN). Residues His447, His449, Cys455, His459, Cys467, and Cys469 each coordinate Zn(2+).

The protein belongs to the arenaviridae GPC protein family. In terms of assembly, interacts with glycoprotein G2. Part of the GP complex (GP-C) together with glycoprotein G1 and glycoprotein G2. The GP-complex interacts with protein Z, which interacts with ribonucleocapsid; these interactions may induce virion budding. Homotrimer; disulfide-linked. In pre-fusion state, G1 homotrimers bind G2 homotrimers via ionic interactions. Part of the GP complex (GP-C) together with glycoprotein G2 and the stable signal peptide. The GP-complex interacts with protein Z, which interacts with ribonucleocapsid; these interactions may induce virion budding. As to quaternary structure, homotrimer. Interacts with the stable signal peptide. In pre-fusion state, G2 homotrimers bind G1 homotrimers via ionic interactions. Part of the GP complex (GP-C) together with glycoprotein G1 and the stable signal peptide. Acidification in the endosome triggers rearrangements, which ultimately leads to a 6 helix bundle formed by the two heptad repeat domains (HR1 and HR2) in post-fusion state. The GP-complex interacts with protein Z, which interacts with ribonucleocapsid; these interactions may induce virion budding. Specific enzymatic cleavages in vivo yield mature proteins. GP-C polyprotein is cleaved in the endoplasmic reticulum by the host protease MBTPS1. Only cleaved glycoprotein is incorporated into virions. In terms of processing, the SSP remains stably associated with the GP complex following cleavage by signal peptidase and plays crucial roles in the trafficking of GP through the secretory pathway. Post-translationally, myristoylation is necessary for GP2-mediated fusion activity.

It is found in the virion membrane. It localises to the host endoplasmic reticulum membrane. Its subcellular location is the host Golgi apparatus membrane. The protein resides in the host cell membrane. Functions as a cleaved signal peptide that is retained as the third component of the GP complex (GP-C). Helps to stabilize the spike complex in its native conformation. The SSP is required for efficient glycoprotein expression, post-translational maturation cleavage of G1 and G2, glycoprotein transport to the cell surface plasma membrane, formation of infectious virus particles, and acid pH-dependent glycoprotein-mediated cell fusion. Functionally, forms the virion spikes together with glycoprotein G2. The glycoprotein spike trimers are connected to the underlying matrix. Interacts with the host receptor leading to virus endocytosis. Its function is as follows. Forms the virion spikes together with glycoprotein G1. The glycoprotein spike trimers are connected to the underlying matrix. Class I viral fusion protein that directs fusion of viral and host endosomal membranes, leading to delivery of the nucleocapsid into the cytoplasm. Membrane fusion is mediated by irreversible conformational changes induced by acidification. The protein is Pre-glycoprotein polyprotein GP complex of Sigmodon hispidus (Hispid cotton rat).